Reading from the N-terminus, the 465-residue chain is Hydroxyacid-oxoacid transhydrogenase, mitochondrial (465 aa).

K443 is modified (N6-acetyllysine). Position 450 is a phosphoserine (S450).

It belongs to the iron-containing alcohol dehydrogenase family. Hydroxyacid-oxoacid transhydrogenase subfamily. In terms of tissue distribution, expressed in white and brown adipose tissues, liver, and kidney. Expression is differentiation-dependent during in vitro brown and white adipogenesis.

The protein localises to the mitochondrion. It catalyses the reaction (S)-3-hydroxybutanoate + 2-oxoglutarate = (R)-2-hydroxyglutarate + acetoacetate. It carries out the reaction 4-hydroxybutanoate + 2-oxoglutarate = (R)-2-hydroxyglutarate + succinate semialdehyde. Its function is as follows. Catalyzes the cofactor-independent reversible oxidation of gamma-hydroxybutyrate (GHB) to succinic semialdehyde (SSA) coupled to reduction of 2-ketoglutarate (2-KG) to D-2-hydroxyglutarate (D-2-HG). L-3-hydroxybutyrate (L-3-OHB) is also a substrate for HOT when using 2-KG as hydrogen acceptor, resulting in the formation of D-2-HG. The sequence is that of Hydroxyacid-oxoacid transhydrogenase, mitochondrial (Adhfe1) from Mus musculus (Mouse).